Consider the following 353-residue polypeptide: UPF0658 Golgi apparatus membrane protein C23H3.04 (353 aa).

Transmembrane regions (helical) follow at residues 39-59 (IFFL…EGYC), 76-96 (SLPI…YLCV), 103-123 (NIIE…YSIV), 172-192 (PFLI…GFLA), 226-246 (LLKI…MVLP), 249-269 (AVVE…ILTL), 281-301 (LMMT…FKII), and 318-338 (MITT…AIGF).

This sequence belongs to the UPF0658 family.

Its subcellular location is the golgi apparatus membrane. This chain is UPF0658 Golgi apparatus membrane protein C23H3.04, found in Schizosaccharomyces pombe (strain 972 / ATCC 24843) (Fission yeast).